Consider the following 370-residue polypeptide: Phospho-N-acetylmuramoyl-pentapeptide-transferase (370 aa).

10 helical membrane-spanning segments follow: residues 24–44 (YLTF…VAMG), 78–98 (TMGG…WADL), 103–123 (VWVV…DDYA), 138–158 (KLVA…LFAP), 177–197 (ALVI…IAGF), 209–229 (GLAI…AYLV), 245–265 (GVGE…GFLW), 273–293 (IFMG…IAVC), 298–318 (LVLG…MIQV), and 347–367 (TVVI…LATL).

The protein belongs to the glycosyltransferase 4 family. MraY subfamily. Mg(2+) is required as a cofactor.

The protein localises to the cell inner membrane. The catalysed reaction is UDP-N-acetyl-alpha-D-muramoyl-L-alanyl-gamma-D-glutamyl-meso-2,6-diaminopimeloyl-D-alanyl-D-alanine + di-trans,octa-cis-undecaprenyl phosphate = di-trans,octa-cis-undecaprenyl diphospho-N-acetyl-alpha-D-muramoyl-L-alanyl-D-glutamyl-meso-2,6-diaminopimeloyl-D-alanyl-D-alanine + UMP. It functions in the pathway cell wall biogenesis; peptidoglycan biosynthesis. In terms of biological role, catalyzes the initial step of the lipid cycle reactions in the biosynthesis of the cell wall peptidoglycan: transfers peptidoglycan precursor phospho-MurNAc-pentapeptide from UDP-MurNAc-pentapeptide onto the lipid carrier undecaprenyl phosphate, yielding undecaprenyl-pyrophosphoryl-MurNAc-pentapeptide, known as lipid I. This chain is Phospho-N-acetylmuramoyl-pentapeptide-transferase, found in Caulobacter vibrioides (strain NA1000 / CB15N) (Caulobacter crescentus).